The sequence spans 336 residues: Zinc transporter ZIP11 (336 aa).

Transmembrane regions (helical) follow at residues 12–32 (LLGT…VFIF), 44–64 (LGFA…APAI), 75–95 (SFAF…VYLA), 188–208 (IMLL…AVGV), 258–278 (WYGQ…TIAI), 280–300 (LAEP…VYVV), and 316–336 (LASW…VGLG).

This sequence belongs to the ZIP transporter (TC 2.A.5) family.

Its subcellular location is the cell membrane. It localises to the nucleus. The protein localises to the cytoplasm. It is found in the golgi apparatus. In terms of biological role, functions as a cellular zinc transporter. The sequence is that of Zinc transporter ZIP11 (slc39a11) from Xenopus tropicalis (Western clawed frog).